The following is a 134-amino-acid chain: MSWQTYVDEHLMCDVGDGQGHHLAAAAIFGHDGSVWAQSANFPQFKGQEFANIMKDFDEPGHLAPTGLFLAGAKYMVIQGEPGAVIRGKKGAGGITIKKTGQSCVFGIYEEPVTPGQCNMVVERLGDYLIEQDL.

Belongs to the profilin family. As to quaternary structure, occurs in many kinds of cells as a complex with monomeric actin in a 1:1 ratio.

It localises to the cytoplasm. The protein localises to the cytoskeleton. Functionally, binds to actin and affects the structure of the cytoskeleton. At high concentrations, profilin prevents the polymerization of actin, whereas it enhances it at low concentrations. By binding to PIP2, it inhibits the formation of IP3 and DG. In Brassica napus (Rape), this protein is Profilin.